A 429-amino-acid chain; its full sequence is tRNA (guanine(9)-N1)-methyltransferase (429 aa).

Residues 131–379 (KERKEAQRRI…AVIPIRKYAP (249 aa)) enclose the SAM-dependent MTase TRM10-type domain. Residues 285–286 (LS), Gly305, 309–313 (DRNRH), Cys317, Leu331, and 344–346 (KAL) each bind S-adenosyl-L-methionine. Catalysis depends on Asp309, which acts as the Proton acceptor. Positions 383 to 429 (AKRAKTETKRNEKVEEEVECTSAEGEEDIGVIEESAEVDPEDVFSNQ) are disordered. Residues 386 to 395 (AKTETKRNEK) show a composition bias toward basic and acidic residues. A compositionally biased stretch (acidic residues) spans 396 to 429 (VEEEVECTSAEGEEDIGVIEESAEVDPEDVFSNQ).

The protein belongs to the class IV-like SAM-binding methyltransferase superfamily. TRM10 family. Monomer.

The protein resides in the cytoplasm. It is found in the nucleus. It catalyses the reaction guanosine(9) in tRNA + S-adenosyl-L-methionine = N(1)-methylguanosine(9) in tRNA + S-adenosyl-L-homocysteine + H(+). S-adenosyl-L-methionine-dependent guanine N(1)-methyltransferase that catalyzes the formation of N(1)-methylguanine at position 9 (m1G9) in cytoplasmic tRNA. This chain is tRNA (guanine(9)-N1)-methyltransferase, found in Cryptococcus neoformans var. neoformans serotype D (strain B-3501A) (Filobasidiella neoformans).